Reading from the N-terminus, the 392-residue chain is Galactokinase (392 aa).

Alpha-D-galactose contacts are provided by arginine 37, glutamate 43, histidine 44, and aspartate 46. Positions 136, 138, 140, and 141 each coordinate ATP. Residue aspartate 186 coordinates alpha-D-galactose. Aspartate 186 acts as the Proton acceptor in catalysis. Serine 230 is modified (phosphoserine). Tyrosine 236 provides a ligand contact to alpha-D-galactose.

Belongs to the GHMP kinase family. GalK subfamily. Homodimer.

The enzyme catalyses alpha-D-galactose + ATP = alpha-D-galactose 1-phosphate + ADP + H(+). It participates in carbohydrate metabolism; galactose metabolism. Its function is as follows. Catalyzes the transfer of a phosphate from ATP to alpha-D-galactose and participates in the first committed step in the catabolism of galactose. This chain is Galactokinase (Galk1), found in Mus musculus (Mouse).